We begin with the raw amino-acid sequence, 480 residues long: Wax ester synthase/diacylglycerol acyltransferase 7 (480 aa).

The Cytoplasmic segment spans residues 1 to 193 (MTYGEEEPVS…LRSIFTIGST (193 aa)). The Proton acceptor role is filled by histidine 135. A helical transmembrane segment spans residues 194 to 214 (MRLLWNTTIDMLLLLATVLFL). The Lumenal segment spans residues 215-329 (KDTKTPLKAG…VKDSKCRWGN (115 aa)). Asparagine 252 is a glycosylation site (N-linked (GlcNAc...) asparagine). A helical membrane pass occupies residues 330–350 (YFSFIFLPFTIGLQTDPLVYL). Residues 351 to 365 (KMSKSMMARKKHSYH) lie on the Cytoplasmic side of the membrane. A helical transmembrane segment spans residues 366 to 386 (AALVYFIIKIVLKVFGAKAAA). The Lumenal segment spans residues 387–480 (ELFDRPVRNT…KASLCERGLL (94 aa)). N-linked (GlcNAc...) asparagine glycosylation occurs at asparagine 395.

The protein in the N-terminal section; belongs to the long-chain O-acyltransferase family. Expressed in roots, stems, leaves, flowers and siliques.

The protein localises to the cell membrane. Its subcellular location is the endoplasmic reticulum membrane. It is found in the golgi apparatus membrane. It carries out the reaction an acyl-CoA + a 1,2-diacyl-sn-glycerol = a triacyl-sn-glycerol + CoA. The catalysed reaction is a long chain fatty alcohol + a fatty acyl-CoA = a wax ester + CoA. It functions in the pathway glycerolipid metabolism; triacylglycerol biosynthesis. The protein operates within lipid metabolism. Functionally, bifunctional wax ester synthase/diacylglycerol acyltransferase that uses acyl-CoAs with 14, 16 and 18 carbons as substrates, preferably in combination with 16:0ol alcohol. Involved in cuticular wax biosynthesis. The chain is Wax ester synthase/diacylglycerol acyltransferase 7 from Arabidopsis thaliana (Mouse-ear cress).